Here is a 226-residue protein sequence, read N- to C-terminus: Thiopurine S-methyltransferase (226 aa).

S-adenosyl-L-methionine-binding residues include Trp-16, Met-51, Glu-72, and Arg-131.

It belongs to the class I-like SAM-binding methyltransferase superfamily. TPMT family.

It localises to the cytoplasm. The catalysed reaction is S-adenosyl-L-methionine + a thiopurine = S-adenosyl-L-homocysteine + a thiopurine S-methylether.. The protein is Thiopurine S-methyltransferase of Francisella tularensis subsp. novicida (strain U112).